A 403-amino-acid chain; its full sequence is Large ribosomal subunit protein uL3 (403 aa).

A disordered region spans residues 1 to 37 (MSHRKFSAPRHGSLGFLPRKRSSRHRGKVKSFPKDDP). Ser-13 bears the Phosphoserine mark. Basic residues predominate over residues 18–31 (PRKRSSRHRGKVKS). A Glycyl lysine isopeptide (Lys-Gly) (interchain with G-Cter in SUMO2) cross-link involves residue Lys-39. An N6-acetyllysine modification is found at Lys-136. Glycyl lysine isopeptide (Lys-Gly) (interchain with G-Cter in SUMO2) cross-links involve residues Lys-224 and Lys-226. His-245 carries the post-translational modification Tele-methylhistidine. N6-acetyllysine; alternate occurs at positions 286 and 294. Lys-286 participates in a covalent cross-link: Glycyl lysine isopeptide (Lys-Gly) (interchain with G-Cter in SUMO2); alternate. Lys-294 is covalently cross-linked (Glycyl lysine isopeptide (Lys-Gly) (interchain with G-Cter in SUMO1); alternate). At Ser-304 the chain carries Phosphoserine. At Lys-366 the chain carries N6-acetyllysine; alternate. Lys-366 participates in a covalent cross-link: Glycyl lysine isopeptide (Lys-Gly) (interchain with G-Cter in SUMO2); alternate. Lys-373 is modified (N6-acetyllysine). Residues Lys-386, Lys-393, and Lys-399 each participate in a glycyl lysine isopeptide (Lys-Gly) (interchain with G-Cter in SUMO2) cross-link.

It belongs to the universal ribosomal protein uL3 family. Component of the large ribosomal subunit. Interacts with DHX33. Post-translationally, constitutively monomethylated at His-245 by METTL18. Methylation at His-245 regulates translation elongation by slowing ribosome traversal on tyrosine codons: slower elongation provides enough time for proper folding of synthesized proteins and prevents cellular aggregation of tyrosine-rich proteins. It is not required for incorporation of RPL3 into ribosomes.

The protein resides in the nucleus. It localises to the nucleolus. The protein localises to the cytoplasm. Component of the large ribosomal subunit. The ribosome is a large ribonucleoprotein complex responsible for the synthesis of proteins in the cell. This is Large ribosomal subunit protein uL3 (RPL3) from Homo sapiens (Human).